Reading from the N-terminus, the 191-residue chain is 2-amino-4-hydroxy-6-hydroxymethyldihydropteridine pyrophosphokinase (191 aa).

This sequence belongs to the HPPK family.

It carries out the reaction 6-hydroxymethyl-7,8-dihydropterin + ATP = (7,8-dihydropterin-6-yl)methyl diphosphate + AMP + H(+). Its pathway is cofactor biosynthesis; tetrahydrofolate biosynthesis; 2-amino-4-hydroxy-6-hydroxymethyl-7,8-dihydropteridine diphosphate from 7,8-dihydroneopterin triphosphate: step 4/4. Catalyzes the transfer of pyrophosphate from adenosine triphosphate (ATP) to 6-hydroxymethyl-7,8-dihydropterin, an enzymatic step in folate biosynthesis pathway. The sequence is that of 2-amino-4-hydroxy-6-hydroxymethyldihydropteridine pyrophosphokinase (folK) from Mycobacterium leprae (strain TN).